Consider the following 67-residue polypeptide: UPF0253 protein VS_2370 (67 aa).

It belongs to the UPF0253 family.

The polypeptide is UPF0253 protein VS_2370 (Vibrio atlanticus (strain LGP32) (Vibrio splendidus (strain Mel32))).